Reading from the N-terminus, the 527-residue chain is Benzoate--CoA ligase (527 aa).

Belongs to the ATP-dependent AMP-binding enzyme family. Benzoate-CoA ligase subfamily. As to quaternary structure, monomer.

The catalysed reaction is benzoate + ATP + CoA = benzoyl-CoA + AMP + diphosphate. Catalyzes the ligation of benzoate and CoA to form benzoyl-CoA at the expense of ATP. The enzyme also ligates 2-aminobenzoate and CoA. The enzyme shows activity toward a number of benzoate derivatives. In Thauera aromatica, this protein is Benzoate--CoA ligase (bclA).